The primary structure comprises 217 residues: Small ribosomal subunit protein uS3 (217 aa).

The KH type-2 domain occupies 38–106 (IRKFIDNELK…KVHINVIEIK (69 aa)).

The protein belongs to the universal ribosomal protein uS3 family. As to quaternary structure, part of the 30S ribosomal subunit. Forms a tight complex with proteins S10 and S14.

Functionally, binds the lower part of the 30S subunit head. Binds mRNA in the 70S ribosome, positioning it for translation. The chain is Small ribosomal subunit protein uS3 from Staphylococcus epidermidis (strain ATCC 35984 / DSM 28319 / BCRC 17069 / CCUG 31568 / BM 3577 / RP62A).